Reading from the N-terminus, the 224-residue chain is Phosphoribosylformylglycinamidine synthase subunit PurQ (224 aa).

A Glutamine amidotransferase type-1 domain is found at 2 to 224 (KIAVIVFPGS…SLLEEGKVKG (223 aa)). Cys86 functions as the Nucleophile in the catalytic mechanism. Residues His195 and Glu197 contribute to the active site.

As to quaternary structure, part of the FGAM synthase complex composed of 1 PurL, 1 PurQ and 2 PurS subunits.

Its subcellular location is the cytoplasm. It carries out the reaction N(2)-formyl-N(1)-(5-phospho-beta-D-ribosyl)glycinamide + L-glutamine + ATP + H2O = 2-formamido-N(1)-(5-O-phospho-beta-D-ribosyl)acetamidine + L-glutamate + ADP + phosphate + H(+). The enzyme catalyses L-glutamine + H2O = L-glutamate + NH4(+). The protein operates within purine metabolism; IMP biosynthesis via de novo pathway; 5-amino-1-(5-phospho-D-ribosyl)imidazole from N(2)-formyl-N(1)-(5-phospho-D-ribosyl)glycinamide: step 1/2. Functionally, part of the phosphoribosylformylglycinamidine synthase complex involved in the purines biosynthetic pathway. Catalyzes the ATP-dependent conversion of formylglycinamide ribonucleotide (FGAR) and glutamine to yield formylglycinamidine ribonucleotide (FGAM) and glutamate. The FGAM synthase complex is composed of three subunits. PurQ produces an ammonia molecule by converting glutamine to glutamate. PurL transfers the ammonia molecule to FGAR to form FGAM in an ATP-dependent manner. PurS interacts with PurQ and PurL and is thought to assist in the transfer of the ammonia molecule from PurQ to PurL. This Ligilactobacillus salivarius (strain UCC118) (Lactobacillus salivarius) protein is Phosphoribosylformylglycinamidine synthase subunit PurQ.